A 656-amino-acid polypeptide reads, in one-letter code: CXXC-type zinc finger protein 1 (656 aa).

At Met-1 the chain carries N-acetylmethionine. Residues 1 to 14 (MEGDGSDPEPPDAG) show a composition bias toward acidic residues. Residues 1 to 20 (MEGDGSDPEPPDAGEDSKSE) are disordered. Ser-6 and Ser-19 each carry phosphoserine. The PHD-type zinc-finger motif lies at 28-76 (YCICRKPDINCFMIGCDNCNEWFHGDCIRITEKMAKAIREWYCRECREK). The tract at residues 84-162 (YRHKKSRERD…QHHQQQQQQI (79 aa)) is disordered. Residues 90–120 (RERDGNERDSSEPRDEGGGRKRPVPDPDLQR) show a composition bias toward basic and acidic residues. Ser-124 is subject to Phosphoserine. The CXXC-type zinc-finger motif lies at 160-209 (QQIKRSARMCGECEACRRTEDCGHCDFCRDMKKFGGPNKIRQKCRLRQCQ). Zn(2+)-binding residues include Cys-169, Cys-172, Cys-175, Cys-181, Cys-184, Cys-187, Cys-203, and Cys-208. Disordered regions lie at residues 219 to 287 (FPSS…LPLD) and 311 to 373 (EESP…ASLP). A Phosphoserine modification is found at Ser-224. Residue Thr-227 is modified to Phosphothreonine. Low complexity predominate over residues 239-249 (LPTQQQPQPSQ). Lys-250 is covalently cross-linked (Glycyl lysine isopeptide (Lys-Gly) (interchain with G-Cter in SUMO2)). Residues 321-334 (RKRAVKVKHVKRRE) are compositionally biased toward basic residues. Residues 335–345 (KKSEKKKEERY) show a composition bias toward basic and acidic residues. Positions 346–358 (KRHRQKQKHKDKW) are enriched in basic residues. Over residues 359–368 (KHPERADAKD) the composition is skewed to basic and acidic residues. Positions 422–474 (AEEHGKKLLERIRREQQSARTRLQEMERRFHELEAIILRAKQQAVREDEESNE) form a coiled coil.

Component of the SET1 complex, at least composed of the catalytic subunit (SETD1A or SETD1B), WDR5, WDR82, RBBP5, ASH2L/ASH2, CXXC1/CFP1 HCFC1 and DPY30. Interacts with SETD1A. Interacts with ZNF335. Interacts with PRDM9; this interaction does not link PRDM9-activated recombination hotspot sites with DSB machinery and is not required for the hotspot recognition pathway. Interacts with histone H3K4me3. Post-translationally, may be regulated by proteolysis. Ubiquitous.

It localises to the nucleus speckle. The protein localises to the nucleus. Transcriptional activator that exhibits a unique DNA binding specificity for CpG unmethylated motifs with a preference for CpGG. This chain is CXXC-type zinc finger protein 1 (CXXC1), found in Homo sapiens (Human).